Here is a 310-residue protein sequence, read N- to C-terminus: Beta-ketoacyl-[acyl-carrier-protein] synthase III 1 (310 aa).

Catalysis depends on residues C112 and H235. The interval Q236–R240 is ACP-binding. N265 is an active-site residue.

The protein belongs to the thiolase-like superfamily. FabH family. Homodimer.

It is found in the cytoplasm. It catalyses the reaction malonyl-[ACP] + acetyl-CoA + H(+) = 3-oxobutanoyl-[ACP] + CO2 + CoA. Its pathway is lipid metabolism; fatty acid biosynthesis. Functionally, catalyzes the condensation reaction of fatty acid synthesis by the addition to an acyl acceptor of two carbons from malonyl-ACP. Catalyzes the first condensation reaction which initiates fatty acid synthesis and may therefore play a role in governing the total rate of fatty acid production. Possesses both acetoacetyl-ACP synthase and acetyl transacylase activities. Its substrate specificity determines the biosynthesis of branched-chain and/or straight-chain of fatty acids. This Bacillus cereus (strain ATCC 14579 / DSM 31 / CCUG 7414 / JCM 2152 / NBRC 15305 / NCIMB 9373 / NCTC 2599 / NRRL B-3711) protein is Beta-ketoacyl-[acyl-carrier-protein] synthase III 1.